A 246-amino-acid polypeptide reads, in one-letter code: Pyridoxine 5'-phosphate synthase (246 aa).

N12 is a binding site for 3-amino-2-oxopropyl phosphate. 1-deoxy-D-xylulose 5-phosphate is bound at residue 14 to 15 (DH). Residue R23 participates in 3-amino-2-oxopropyl phosphate binding. Catalysis depends on H48, which acts as the Proton acceptor. Residues R50 and H55 each contribute to the 1-deoxy-D-xylulose 5-phosphate site. E75 serves as the catalytic Proton acceptor. Residue T105 coordinates 1-deoxy-D-xylulose 5-phosphate. H196 (proton donor) is an active-site residue. 3-amino-2-oxopropyl phosphate-binding positions include G197 and 218 to 219 (GH).

This sequence belongs to the PNP synthase family. Homooctamer; tetramer of dimers.

The protein localises to the cytoplasm. The enzyme catalyses 3-amino-2-oxopropyl phosphate + 1-deoxy-D-xylulose 5-phosphate = pyridoxine 5'-phosphate + phosphate + 2 H2O + H(+). Its pathway is cofactor biosynthesis; pyridoxine 5'-phosphate biosynthesis; pyridoxine 5'-phosphate from D-erythrose 4-phosphate: step 5/5. Functionally, catalyzes the complicated ring closure reaction between the two acyclic compounds 1-deoxy-D-xylulose-5-phosphate (DXP) and 3-amino-2-oxopropyl phosphate (1-amino-acetone-3-phosphate or AAP) to form pyridoxine 5'-phosphate (PNP) and inorganic phosphate. The sequence is that of Pyridoxine 5'-phosphate synthase from Pseudomonas savastanoi pv. phaseolicola (strain 1448A / Race 6) (Pseudomonas syringae pv. phaseolicola (strain 1448A / Race 6)).